A 113-amino-acid chain; its full sequence is UPF0482 protein YnfB (113 aa).

A signal peptide spans 1–28 (MNYTLSKRLCLTAMLTLAAVVYTTSAFA).

It belongs to the UPF0482 family.

The chain is UPF0482 protein YnfB from Salmonella arizonae (strain ATCC BAA-731 / CDC346-86 / RSK2980).